Consider the following 289-residue polypeptide: MAAETASGYIQHHLQNLTYGQLPDGSWGFAHSAAEAKAMGFWAFHLDTLGWSVALGLIFLLIFRMAAKKATSGQPGGLQNFVEVMVDFVNGSVKDSFHGRSPVIAPLALTIFVWVFLMNAVDLVPVDWIPQLAILISGDPHIPFRAVSTTDPNATLAMAFCVFALIIFYSIKVKGLGGFIGELTLHPFGSKNIFVQILLIPVNFLLEFVTLIAKPISLALRLFGNMYAGELVFILIAVMFGSGLLWLSGLGVVLQWAWAVFHILIITLQAFIFMMLTIVYLSMAHEDNH.

Transmembrane regions (helical) follow at residues 43-63, 103-123, 160-180, 193-213, 232-252, and 259-279; these read AFHL…LLIF, VIAP…AVDL, FCVF…GGFI, IFVQ…TLIA, VFIL…GLGV, and AVFH…LTIV.

It belongs to the ATPase A chain family. In terms of assembly, F-type ATPases have 2 components, CF(1) - the catalytic core - and CF(0) - the membrane proton channel. CF(1) has five subunits: alpha(3), beta(3), gamma(1), delta(1), epsilon(1). CF(0) has three main subunits: a(1), b(2) and c(9-12). The alpha and beta chains form an alternating ring which encloses part of the gamma chain. CF(1) is attached to CF(0) by a central stalk formed by the gamma and epsilon chains, while a peripheral stalk is formed by the delta and b chains.

It localises to the cell inner membrane. In terms of biological role, key component of the proton channel; it plays a direct role in the translocation of protons across the membrane. The chain is ATP synthase subunit a from Pseudomonas putida (strain ATCC 700007 / DSM 6899 / JCM 31910 / BCRC 17059 / LMG 24140 / F1).